A 2472-amino-acid polypeptide reads, in one-letter code: Highly reducing polyketide synthase xilA (2472 aa).

One can recognise a Ketosynthase family 3 (KS3) domain in the interval 1–417; the sequence is MPGGVRDLPA…GTNGHCIIDD (417 aa). Catalysis depends on for beta-ketoacyl synthase activity residues Cys-162, His-298, and His-340. A disordered region spans residues 442–502; sequence NDINGKSGTN…QRKHHHPKTD (61 aa). A compositionally biased stretch (low complexity) spans 450–489; sequence TNGANGANRVNGVNGVNGVNGVNGANGHSNASLLSNGSNN. In terms of domain architecture, Malonyl-CoA:ACP transacylase (MAT) spans 597-932; sequence FIFTGQGAQW…CTGTLFVHNV (336 aa). The segment at 991-1129 is N-terminal hotdog fold; it reads HDLLGSKVPG…GQIKVEVAKF (139 aa). Residues 991-1294 form the PKS/mFAS DH domain; that stretch reads HDLLGSKVPG…FTSLNNEQES (304 aa). The active-site Proton acceptor; for dehydratase activity is the His-1023. The interval 1141–1294 is C-terminal hotdog fold; the sequence is GRLVDAQTWY…FTSLNNEQES (154 aa). Residue Asp-1207 is the Proton donor; for dehydratase activity of the active site. Residues 1289-1505 form a methyltransferase (CMeT) domain region; that stretch reads NNEQESPSTG…IITVHALRSI (217 aa). Positions 1724-2036 constitute an Enoyl reductase (ER) domain; that stretch reads GLLTSLYFKP…KGTHIGKMVI (313 aa). The region spanning 2060–2239 is the Ketoreductase (KR) domain; that stretch reads ASYILVGGLS…ATTVSLGFIK (180 aa). Positions 2391–2469 constitute a Carrier domain; sequence ETVKLVSDAI…SIARVIVEEA (79 aa). Ser-2428 is subject to O-(pantetheine 4'-phosphoryl)serine.

It depends on pantetheine 4'-phosphate as a cofactor.

Its pathway is secondary metabolite biosynthesis. In terms of biological role, highly reducing polyketide synthase; part of the gene cluster that mediates the biosynthesis of the 6-methyl-2-pyrone derivative xylariolide D. XilA produces the 5-alkyl-6-methyl-2-pyrone backbone called prexylariolide D via sequential condensations of 4 malonyl-CoA units with one acetyl-CoA starter unit. During the biosynthesis, the linear polyketide chain is branched by the addition of an acetyl unit as the origin of the methyl group at the 2-pyrone ring. Prexylariolide D is then hydroxylated at the side chain by xilC to form the final product, xylariolide D. This Penicillium crustosum (Blue mold fungus) protein is Highly reducing polyketide synthase xilA.